Reading from the N-terminus, the 143-residue chain is Hemoglobin subunit alpha (143 aa).

N-acetylserine is present on serine 2. Residues 2–143 form the Globin domain; that stretch reads SLSDTDKAVV…LALALSEKYR (142 aa). Histidine 60 contacts O2. Heme b is bound at residue histidine 89.

It belongs to the globin family. Heterotetramer of two alpha chains and two beta chains. In terms of tissue distribution, red blood cells.

Involved in oxygen transport from gills to the various peripheral tissues. The chain is Hemoglobin subunit alpha (hbaa1) from Danio rerio (Zebrafish).